Here is a 278-residue protein sequence, read N- to C-terminus: Undecaprenyl-diphosphatase (278 aa).

6 consecutive transmembrane segments (helical) span residues 49–69 (ANTF…VVFW), 97–117 (HVLI…DFID), 120–140 (LFSI…MIAA), 197–217 (ADFT…LSLV), 226–246 (GDLG…LLSI), and 258–278 (LVPF…IVYM).

The protein belongs to the UppP family.

It is found in the cell membrane. The enzyme catalyses di-trans,octa-cis-undecaprenyl diphosphate + H2O = di-trans,octa-cis-undecaprenyl phosphate + phosphate + H(+). In terms of biological role, catalyzes the dephosphorylation of undecaprenyl diphosphate (UPP). Confers resistance to bacitracin. The protein is Undecaprenyl-diphosphatase of Exiguobacterium sibiricum (strain DSM 17290 / CCUG 55495 / CIP 109462 / JCM 13490 / 255-15).